We begin with the raw amino-acid sequence, 193 residues long: SCO1 protein homolog (193 aa).

An N-terminal signal peptide occupies residues 1-18 (MKVIKGLTAGLIFLFLCA). A lipid anchor (N-palmitoyl cysteine) is attached at Cys19. Cys19 is lipidated: S-diacylglycerol cysteine. Positions 26–191 (DPLNYEVEPF…IISDVKSAST (166 aa)) constitute a Thioredoxin domain. Cys64, Cys68, and His154 together coordinate Cu cation.

Belongs to the SCO1/2 family. In terms of assembly, monomer.

It localises to the cell membrane. Functionally, necessary for insertion of copper into the active site of cytochrome c oxidase. May play a role in copper homeostasis or redox signaling. This chain is SCO1 protein homolog (ypmQ), found in Bacillus subtilis (strain 168).